A 212-amino-acid polypeptide reads, in one-letter code: Putative 3-methyladenine DNA glycosylase (212 aa).

This sequence belongs to the DNA glycosylase MPG family.

The sequence is that of Putative 3-methyladenine DNA glycosylase from Psychrobacter cryohalolentis (strain ATCC BAA-1226 / DSM 17306 / VKM B-2378 / K5).